A 193-amino-acid chain; its full sequence is Holliday junction branch migration complex subunit RuvA (193 aa).

The segment at M1–L64 is domain I. The interval T65–L139 is domain II. The interval L139–A143 is flexible linker. The interval S144–V193 is domain III.

The protein belongs to the RuvA family. Homotetramer. Forms an RuvA(8)-RuvB(12)-Holliday junction (HJ) complex. HJ DNA is sandwiched between 2 RuvA tetramers; dsDNA enters through RuvA and exits via RuvB. An RuvB hexamer assembles on each DNA strand where it exits the tetramer. Each RuvB hexamer is contacted by two RuvA subunits (via domain III) on 2 adjacent RuvB subunits; this complex drives branch migration. In the full resolvosome a probable DNA-RuvA(4)-RuvB(12)-RuvC(2) complex forms which resolves the HJ.

Its subcellular location is the cytoplasm. Functionally, the RuvA-RuvB-RuvC complex processes Holliday junction (HJ) DNA during genetic recombination and DNA repair, while the RuvA-RuvB complex plays an important role in the rescue of blocked DNA replication forks via replication fork reversal (RFR). RuvA specifically binds to HJ cruciform DNA, conferring on it an open structure. The RuvB hexamer acts as an ATP-dependent pump, pulling dsDNA into and through the RuvAB complex. HJ branch migration allows RuvC to scan DNA until it finds its consensus sequence, where it cleaves and resolves the cruciform DNA. The protein is Holliday junction branch migration complex subunit RuvA of Burkholderia ambifaria (strain ATCC BAA-244 / DSM 16087 / CCUG 44356 / LMG 19182 / AMMD) (Burkholderia cepacia (strain AMMD)).